Consider the following 264-residue polypeptide: Thymidylate synthase (264 aa).

Residue Arg-21 coordinates dUMP. (6R)-5,10-methylene-5,6,7,8-tetrahydrofolate is bound at residue His-51. 126–127 (RR) is a binding site for dUMP. Cys-146 functions as the Nucleophile in the catalytic mechanism. DUMP contacts are provided by residues 166 to 169 (RSCD), Asn-177, and 207 to 209 (HLY). Residue Asp-169 participates in (6R)-5,10-methylene-5,6,7,8-tetrahydrofolate binding. Ser-263 lines the (6R)-5,10-methylene-5,6,7,8-tetrahydrofolate pocket.

Belongs to the thymidylate synthase family. Bacterial-type ThyA subfamily. As to quaternary structure, homodimer.

It is found in the cytoplasm. It carries out the reaction dUMP + (6R)-5,10-methylene-5,6,7,8-tetrahydrofolate = 7,8-dihydrofolate + dTMP. Its pathway is pyrimidine metabolism; dTTP biosynthesis. Catalyzes the reductive methylation of 2'-deoxyuridine-5'-monophosphate (dUMP) to 2'-deoxythymidine-5'-monophosphate (dTMP) while utilizing 5,10-methylenetetrahydrofolate (mTHF) as the methyl donor and reductant in the reaction, yielding dihydrofolate (DHF) as a by-product. This enzymatic reaction provides an intracellular de novo source of dTMP, an essential precursor for DNA biosynthesis. The sequence is that of Thymidylate synthase from Buchnera aphidicola subsp. Acyrthosiphon pisum (strain APS) (Acyrthosiphon pisum symbiotic bacterium).